The chain runs to 191 residues: Thymidylate kinase (191 aa).

Position 7–14 (7–14 (GIDGVGKS)) interacts with ATP.

It belongs to the thymidylate kinase family.

It catalyses the reaction dTMP + ATP = dTDP + ADP. Functionally, phosphorylation of dTMP to form dTDP in both de novo and salvage pathways of dTTP synthesis. In Helicobacter acinonychis (strain Sheeba), this protein is Thymidylate kinase.